The primary structure comprises 421 residues: Gamma-glutamyl phosphate reductase (421 aa).

The protein belongs to the gamma-glutamyl phosphate reductase family.

It is found in the cytoplasm. The catalysed reaction is L-glutamate 5-semialdehyde + phosphate + NADP(+) = L-glutamyl 5-phosphate + NADPH + H(+). It participates in amino-acid biosynthesis; L-proline biosynthesis; L-glutamate 5-semialdehyde from L-glutamate: step 2/2. Catalyzes the NADPH-dependent reduction of L-glutamate 5-phosphate into L-glutamate 5-semialdehyde and phosphate. The product spontaneously undergoes cyclization to form 1-pyrroline-5-carboxylate. The sequence is that of Gamma-glutamyl phosphate reductase from Brucella suis biovar 1 (strain 1330).